We begin with the raw amino-acid sequence, 169 residues long: Putative prolyl-tRNA synthetase associated domain-containing protein 1 (169 aa).

This sequence belongs to the PRORSD1 family.

This chain is Putative prolyl-tRNA synthetase associated domain-containing protein 1 (PRORSD1P), found in Homo sapiens (Human).